We begin with the raw amino-acid sequence, 147 residues long: Small ribosomal subunit protein uS12 (147 aa).

This sequence belongs to the universal ribosomal protein uS12 family. As to quaternary structure, part of the 30S ribosomal subunit.

Functionally, with S4 and S5 plays an important role in translational accuracy. Located at the interface of the 30S and 50S subunits. In Methanococcus maripaludis (strain DSM 14266 / JCM 13030 / NBRC 101832 / S2 / LL), this protein is Small ribosomal subunit protein uS12.